A 421-amino-acid chain; its full sequence is Diaminopimelate decarboxylase (421 aa).

Lys63 carries the post-translational modification N6-(pyridoxal phosphate)lysine. Pyridoxal 5'-phosphate is bound by residues Gly242 and 278–281 (EPGR). Substrate-binding residues include Arg281, Arg317, and Tyr321. Cys346 serves as the catalytic Proton donor. 2 residues coordinate substrate: Glu347 and Tyr375. Pyridoxal 5'-phosphate is bound at residue Tyr375.

This sequence belongs to the Orn/Lys/Arg decarboxylase class-II family. LysA subfamily. Homodimer. Requires pyridoxal 5'-phosphate as cofactor.

The catalysed reaction is meso-2,6-diaminopimelate + H(+) = L-lysine + CO2. It participates in amino-acid biosynthesis; L-lysine biosynthesis via DAP pathway; L-lysine from DL-2,6-diaminopimelate: step 1/1. Specifically catalyzes the decarboxylation of meso-diaminopimelate (meso-DAP) to L-lysine. This is Diaminopimelate decarboxylase from Zymomonas mobilis subsp. mobilis (strain ATCC 31821 / ZM4 / CP4).